Reading from the N-terminus, the 379-residue chain is Succinyl-diaminopimelate desuccinylase (379 aa).

Histidine 70 contacts Zn(2+). Aspartate 72 is an active-site residue. Residue aspartate 103 coordinates Zn(2+). The active-site Proton acceptor is glutamate 137. Residues glutamate 138, glutamate 166, and histidine 352 each coordinate Zn(2+).

The protein belongs to the peptidase M20A family. DapE subfamily. Homodimer. Requires Zn(2+) as cofactor. The cofactor is Co(2+).

It carries out the reaction N-succinyl-(2S,6S)-2,6-diaminopimelate + H2O = (2S,6S)-2,6-diaminopimelate + succinate. The protein operates within amino-acid biosynthesis; L-lysine biosynthesis via DAP pathway; LL-2,6-diaminopimelate from (S)-tetrahydrodipicolinate (succinylase route): step 3/3. Functionally, catalyzes the hydrolysis of N-succinyl-L,L-diaminopimelic acid (SDAP), forming succinate and LL-2,6-diaminopimelate (DAP), an intermediate involved in the bacterial biosynthesis of lysine and meso-diaminopimelic acid, an essential component of bacterial cell walls. The protein is Succinyl-diaminopimelate desuccinylase of Shewanella sp. (strain W3-18-1).